We begin with the raw amino-acid sequence, 257 residues long: Imidazole glycerol phosphate synthase subunit HisF (257 aa).

Catalysis depends on residues aspartate 11 and aspartate 130.

The protein belongs to the HisA/HisF family. Heterodimer of HisH and HisF.

Its subcellular location is the cytoplasm. It catalyses the reaction 5-[(5-phospho-1-deoxy-D-ribulos-1-ylimino)methylamino]-1-(5-phospho-beta-D-ribosyl)imidazole-4-carboxamide + L-glutamine = D-erythro-1-(imidazol-4-yl)glycerol 3-phosphate + 5-amino-1-(5-phospho-beta-D-ribosyl)imidazole-4-carboxamide + L-glutamate + H(+). The protein operates within amino-acid biosynthesis; L-histidine biosynthesis; L-histidine from 5-phospho-alpha-D-ribose 1-diphosphate: step 5/9. Functionally, IGPS catalyzes the conversion of PRFAR and glutamine to IGP, AICAR and glutamate. The HisF subunit catalyzes the cyclization activity that produces IGP and AICAR from PRFAR using the ammonia provided by the HisH subunit. The chain is Imidazole glycerol phosphate synthase subunit HisF from Shewanella frigidimarina (strain NCIMB 400).